The chain runs to 518 residues: Protein nucleotidyltransferase YdiU (518 aa).

ATP contacts are provided by Gly100, Gly102, Arg103, Lys123, Asp135, Gly136, Arg193, and Arg200. Residue Asp270 is the Proton acceptor of the active site. Mg(2+) contacts are provided by Asn271 and Asp280. Asp280 provides a ligand contact to ATP.

It belongs to the SELO family. Requires Mg(2+) as cofactor. It depends on Mn(2+) as a cofactor.

It carries out the reaction L-seryl-[protein] + ATP = 3-O-(5'-adenylyl)-L-seryl-[protein] + diphosphate. The catalysed reaction is L-threonyl-[protein] + ATP = 3-O-(5'-adenylyl)-L-threonyl-[protein] + diphosphate. It catalyses the reaction L-tyrosyl-[protein] + ATP = O-(5'-adenylyl)-L-tyrosyl-[protein] + diphosphate. The enzyme catalyses L-histidyl-[protein] + UTP = N(tele)-(5'-uridylyl)-L-histidyl-[protein] + diphosphate. It carries out the reaction L-seryl-[protein] + UTP = O-(5'-uridylyl)-L-seryl-[protein] + diphosphate. The catalysed reaction is L-tyrosyl-[protein] + UTP = O-(5'-uridylyl)-L-tyrosyl-[protein] + diphosphate. Its function is as follows. Nucleotidyltransferase involved in the post-translational modification of proteins. It can catalyze the addition of adenosine monophosphate (AMP) or uridine monophosphate (UMP) to a protein, resulting in modifications known as AMPylation and UMPylation. In Xanthomonas oryzae pv. oryzae (strain PXO99A), this protein is Protein nucleotidyltransferase YdiU.